Reading from the N-terminus, the 396-residue chain is Elongation factor Tu (396 aa).

Residues Lys11 to Lys205 enclose the tr-type G domain. The G1 stretch occupies residues Gly20–Thr27. GTP is bound at residue Gly20 to Thr27. A Mg(2+)-binding site is contributed by Thr27. The interval Gly61–Asn65 is G2. Positions Asp82 to Gly85 are G3. Residues Asp82–His86 and Asn137–Asp140 each bind GTP. The segment at Asn137–Asp140 is G4. Positions Ser175–Leu177 are G5.

It belongs to the TRAFAC class translation factor GTPase superfamily. Classic translation factor GTPase family. EF-Tu/EF-1A subfamily. Monomer.

Its subcellular location is the cytoplasm. It catalyses the reaction GTP + H2O = GDP + phosphate + H(+). In terms of biological role, GTP hydrolase that promotes the GTP-dependent binding of aminoacyl-tRNA to the A-site of ribosomes during protein biosynthesis. This chain is Elongation factor Tu, found in Limosilactobacillus fermentum (strain NBRC 3956 / LMG 18251) (Lactobacillus fermentum).